The sequence spans 100 residues: Putative septation protein SpoVG (100 aa).

It belongs to the SpoVG family.

Could be involved in septation. This is Putative septation protein SpoVG from Staphylococcus aureus (strain MRSA252).